The sequence spans 267 residues: Cilia- and flagella-associated protein 300 (267 aa).

The protein belongs to the CFAP300 family. As to quaternary structure, interacts with DNAAF2. Expressed in nasal epithelial cells.

The protein localises to the cytoplasm. Its subcellular location is the cytoskeleton. It is found in the cilium axoneme. Cilium- and flagellum-specific protein that plays a role in axonemal structure organization and motility. May play a role in outer and inner dynein arm assembly. In Homo sapiens (Human), this protein is Cilia- and flagella-associated protein 300.